The primary structure comprises 512 residues: Apolipoprotein N-acyltransferase (512 aa).

The next 6 membrane-spanning stretches (helical) occupy residues 5-25 (LDKY…FAAA), 56-76 (FAVS…FYWI), 92-112 (VPLT…CFWL), 118-138 (LPRG…TEFA), 168-188 (LGGI…LVLA), and 195-215 (SGKR…GYTA). The CN hydrolase domain maps to 233 to 477 (LQGNIDQTLK…ETVLEGHIKG (245 aa)). The active-site Proton acceptor is Glu-271. Lys-337 is a catalytic residue. Cys-389 functions as the Nucleophile in the catalytic mechanism. A helical membrane pass occupies residues 487–507 (TGSSWWLMGILALAALILFIF).

Belongs to the CN hydrolase family. Apolipoprotein N-acyltransferase subfamily.

It localises to the cell inner membrane. The enzyme catalyses N-terminal S-1,2-diacyl-sn-glyceryl-L-cysteinyl-[lipoprotein] + a glycerophospholipid = N-acyl-S-1,2-diacyl-sn-glyceryl-L-cysteinyl-[lipoprotein] + a 2-acyl-sn-glycero-3-phospholipid + H(+). Its pathway is protein modification; lipoprotein biosynthesis (N-acyl transfer). Its function is as follows. Catalyzes the phospholipid dependent N-acylation of the N-terminal cysteine of apolipoprotein, the last step in lipoprotein maturation. This Neisseria meningitidis serogroup B (strain ATCC BAA-335 / MC58) protein is Apolipoprotein N-acyltransferase.